The sequence spans 146 residues: UPF0742 protein SPAC977.02 (146 aa).

Residues 38-60 (LTVKYCLAVKLLIYLLYCWYIYS) traverse the membrane as a helical segment.

It belongs to the UPF0742 family.

It is found in the cytoplasm. The protein resides in the nucleus membrane. The chain is UPF0742 protein SPAC977.02 from Schizosaccharomyces pombe (strain 972 / ATCC 24843) (Fission yeast).